Reading from the N-terminus, the 422-residue chain is Serine hydroxymethyltransferase (422 aa).

(6S)-5,6,7,8-tetrahydrofolate contacts are provided by residues Leu-120 and 124 to 126; that span reads GHL. At Lys-228 the chain carries N6-(pyridoxal phosphate)lysine.

The protein belongs to the SHMT family. Homodimer. Pyridoxal 5'-phosphate is required as a cofactor.

It localises to the cytoplasm. The enzyme catalyses (6R)-5,10-methylene-5,6,7,8-tetrahydrofolate + glycine + H2O = (6S)-5,6,7,8-tetrahydrofolate + L-serine. The protein operates within one-carbon metabolism; tetrahydrofolate interconversion. It participates in amino-acid biosynthesis; glycine biosynthesis; glycine from L-serine: step 1/1. In terms of biological role, catalyzes the reversible interconversion of serine and glycine with tetrahydrofolate (THF) serving as the one-carbon carrier. This reaction serves as the major source of one-carbon groups required for the biosynthesis of purines, thymidylate, methionine, and other important biomolecules. Also exhibits THF-independent aldolase activity toward beta-hydroxyamino acids, producing glycine and aldehydes, via a retro-aldol mechanism. The sequence is that of Serine hydroxymethyltransferase from Actinobacillus succinogenes (strain ATCC 55618 / DSM 22257 / CCUG 43843 / 130Z).